The chain runs to 197 residues: ATP-dependent Clp protease proteolytic subunit (197 aa).

Ser-98 functions as the Nucleophile in the catalytic mechanism. His-123 is an active-site residue.

This sequence belongs to the peptidase S14 family. In terms of assembly, fourteen ClpP subunits assemble into 2 heptameric rings which stack back to back to give a disk-like structure with a central cavity, resembling the structure of eukaryotic proteasomes. Forms large heterooligomeric complexes consisting of an ATPase component (ClpX, ClpC or ClpE) and a proteolytic component (ClpP).

It localises to the cytoplasm. It catalyses the reaction Hydrolysis of proteins to small peptides in the presence of ATP and magnesium. alpha-casein is the usual test substrate. In the absence of ATP, only oligopeptides shorter than five residues are hydrolyzed (such as succinyl-Leu-Tyr-|-NHMec, and Leu-Tyr-Leu-|-Tyr-Trp, in which cleavage of the -Tyr-|-Leu- and -Tyr-|-Trp bonds also occurs).. With respect to regulation, low intrinsic peptidase activity is stimulated by ATP-binding subunits ClpC, ClpE and ClpX. Activity is disregulated by acyldepsipeptides (ADEP) antibiotics, which negate the need for ATP-binding subunits for activation and which makes it into an unregulated protease. Each ClpP subunit binds 1 ADEP molecule, which prevents binding of ClpX. ADEP binding causes conformational shifts that open the gated pore of the ring. Protease activity is inhibited by diisopropylfluoro-phosphate. Protease activity is inhibited by bortezomib, an oncology drug originally designed to work on the human proteasome. In terms of biological role, cleaves peptides in various proteins in a process that requires ATP hydrolysis. Has a limited peptidase activity in the absence of ATP-binding subunits ClpC, ClpE or ClpX. Has a chymotrypsin-like activity. Plays a major role in the degradation of misfolded proteins. ClpXP is involved in the complete degradation of the site-2 clipped anti-sigma-W factor RsiW. This results in the release of SigW and the transcriptional activation of genes under the control of the sigma-W factor. Probably the major protease that degrades proteins tagged by trans-translation. This Bacillus subtilis (strain 168) protein is ATP-dependent Clp protease proteolytic subunit.